A 181-amino-acid polypeptide reads, in one-letter code: Crossover junction endodeoxyribonuclease RuvC (181 aa).

Residues Asp-8, Glu-67, and Asp-139 contribute to the active site. Mg(2+) contacts are provided by Asp-8, Glu-67, and Asp-139.

Belongs to the RuvC family. As to quaternary structure, homodimer which binds Holliday junction (HJ) DNA. The HJ becomes 2-fold symmetrical on binding to RuvC with unstacked arms; it has a different conformation from HJ DNA in complex with RuvA. In the full resolvosome a probable DNA-RuvA(4)-RuvB(12)-RuvC(2) complex forms which resolves the HJ. Mg(2+) is required as a cofactor.

Its subcellular location is the cytoplasm. The enzyme catalyses Endonucleolytic cleavage at a junction such as a reciprocal single-stranded crossover between two homologous DNA duplexes (Holliday junction).. In terms of biological role, the RuvA-RuvB-RuvC complex processes Holliday junction (HJ) DNA during genetic recombination and DNA repair. Endonuclease that resolves HJ intermediates. Cleaves cruciform DNA by making single-stranded nicks across the HJ at symmetrical positions within the homologous arms, yielding a 5'-phosphate and a 3'-hydroxyl group; requires a central core of homology in the junction. The consensus cleavage sequence is 5'-(A/T)TT(C/G)-3'. Cleavage occurs on the 3'-side of the TT dinucleotide at the point of strand exchange. HJ branch migration catalyzed by RuvA-RuvB allows RuvC to scan DNA until it finds its consensus sequence, where it cleaves and resolves the cruciform DNA. This Acinetobacter baumannii (strain SDF) protein is Crossover junction endodeoxyribonuclease RuvC.